Reading from the N-terminus, the 1299-residue chain is DNA-directed RNA polymerase subunit beta' (1299 aa).

Cys60, Cys62, Cys75, and Cys78 together coordinate Zn(2+). Residues Asp535, Asp537, and Asp539 each contribute to the Mg(2+) site. 4 residues coordinate Zn(2+): Cys877, Cys954, Cys961, and Cys964.

This sequence belongs to the RNA polymerase beta' chain family. The RNAP catalytic core consists of 2 alpha, 1 beta, 1 beta' and 1 omega subunit. When a sigma factor is associated with the core the holoenzyme is formed, which can initiate transcription. Requires Mg(2+) as cofactor. Zn(2+) is required as a cofactor.

It catalyses the reaction RNA(n) + a ribonucleoside 5'-triphosphate = RNA(n+1) + diphosphate. DNA-dependent RNA polymerase catalyzes the transcription of DNA into RNA using the four ribonucleoside triphosphates as substrates. This chain is DNA-directed RNA polymerase subunit beta', found in Paenarthrobacter aurescens (strain TC1).